The following is a 390-amino-acid chain: GPI inositol-deacylase (390 aa).

Residues 21-41 (FIVYFIICLTIIISALGVYLY) form a helical membrane-spanning segment. Ser-202 is an active-site residue. A helical membrane pass occupies residues 354–374 (VHLLSLTIFALKWTIIVLAII).

This sequence belongs to the GPI inositol-deacylase family.

The protein resides in the endoplasmic reticulum membrane. Its function is as follows. Involved in inositol deacylation of GPI-anchored proteins which plays important roles in the quality control and ER-associated degradation of GPI-anchored proteins. The polypeptide is GPI inositol-deacylase (BST1) (Candida albicans (strain SC5314 / ATCC MYA-2876) (Yeast)).